The following is a 375-amino-acid chain: Anhydro-N-acetylmuramic acid kinase (375 aa).

12-19 (GTSLDGVD) contacts ATP.

This sequence belongs to the anhydro-N-acetylmuramic acid kinase family.

The enzyme catalyses 1,6-anhydro-N-acetyl-beta-muramate + ATP + H2O = N-acetyl-D-muramate 6-phosphate + ADP + H(+). The protein operates within amino-sugar metabolism; 1,6-anhydro-N-acetylmuramate degradation. It functions in the pathway cell wall biogenesis; peptidoglycan recycling. In terms of biological role, catalyzes the specific phosphorylation of 1,6-anhydro-N-acetylmuramic acid (anhMurNAc) with the simultaneous cleavage of the 1,6-anhydro ring, generating MurNAc-6-P. Is required for the utilization of anhMurNAc either imported from the medium or derived from its own cell wall murein, and thus plays a role in cell wall recycling. The protein is Anhydro-N-acetylmuramic acid kinase of Variovorax paradoxus (strain S110).